We begin with the raw amino-acid sequence, 94 residues long: Selenoprotein K (94 aa).

Residues 20-42 (LSFLTDFFWGAVEFIGLFFQTLV) form a helical membrane-spanning segment. The tract at residues 48–94 (KDGNNSASSRFSDGRGPPGFPGRRRMGRINHGAGPTPPPMGGGGUGR) is disordered. Residues 49 to 58 (DGNNSASSRF) are compositionally biased toward polar residues. Residue Sec92 is a non-standard amino acid, selenocysteine.

It belongs to the selenoprotein K family.

Its subcellular location is the endoplasmic reticulum membrane. It localises to the cell membrane. In terms of biological role, required for Ca(2+) flux in immune cells and plays a role in T-cell proliferation and in T-cell and neutrophil migration. Involved in endoplasmic reticulum-associated degradation (ERAD) of soluble glycosylated proteins. Required for cell surface expression of CD36 and involved in macrophage uptake of low-density lipoprotein and in foam cell formation. Required for palmitoylation. The polypeptide is Selenoprotein K (selenok) (Danio rerio (Zebrafish)).